Reading from the N-terminus, the 202-residue chain is Protein DEHYDRATION-INDUCED 19 homolog 5 (202 aa).

The segment covering 88 to 97 (SHLLKRRKPS) has biased composition (basic residues). The disordered stretch occupies residues 88–120 (SHLLKRRKPSRPSSSWPTPSNNSDPYFEGPPQY). A compositionally biased stretch (low complexity) spans 98–112 (RPSSSWPTPSNNSDP).

It belongs to the Di19 family.

The polypeptide is Protein DEHYDRATION-INDUCED 19 homolog 5 (DI19-5) (Oryza sativa subsp. japonica (Rice)).